A 383-amino-acid polypeptide reads, in one-letter code: Probable protein phosphatase 2C 13 (383 aa).

The 272-residue stretch at 78-349 (RSGSFADIRS…DNMTVIVICF (272 aa)) folds into the PPM-type phosphatase domain. 4 residues coordinate Mn(2+): aspartate 121, glycine 122, aspartate 297, and aspartate 340.

Belongs to the PP2C family. It depends on Mg(2+) as a cofactor. Requires Mn(2+) as cofactor.

The catalysed reaction is O-phospho-L-seryl-[protein] + H2O = L-seryl-[protein] + phosphate. The enzyme catalyses O-phospho-L-threonyl-[protein] + H2O = L-threonyl-[protein] + phosphate. The chain is Probable protein phosphatase 2C 13 from Arabidopsis thaliana (Mouse-ear cress).